A 648-amino-acid polypeptide reads, in one-letter code: Probable ATP-dependent RNA helicase DDX43 (648 aa).

Residues 1-60 form a disordered region; that stretch reads MSHHGGAPKASTWVVASRRSSTVSRAPERRPAEELNRTGPEGYSVGRGGRWRGTSRPPEA. The segment covering 10-25 has biased composition (low complexity); that stretch reads ASTWVVASRRSSTVSR. Residues 26–36 are compositionally biased toward basic and acidic residues; the sequence is APERRPAEELN. A KH domain is found at 67–128; sequence ELPLCFALKS…AMQTKAKAVI (62 aa). The Q motif signature appears at 242 to 270; that stretch reads TFDDAFQCYPEVMENIKKAGFQKPTPIQS. The region spanning 273-448 is the Helicase ATP-binding domain; that stretch reads WPIVLQGIDL…QSYLKEPMIV (176 aa). 286 to 293 contributes to the ATP binding site; it reads AQTGTGKT. The DEAD box signature appears at 396–399; the sequence is DEAD. In terms of domain architecture, Helicase C-terminal spans 460 to 621; sequence SVKQNIIVTT…SIPEELVSMA (162 aa). The segment covering 628-641 has biased composition (basic and acidic residues); sequence QQKREMERKMERPQ. The interval 628-648 is disordered; sequence QQKREMERKMERPQGRPKKFH.

This sequence belongs to the DEAD box helicase family. As to expression, expressed in testis. Expressed in many tumors of various histological types at a level that is 100-fold higher than the level observed in normal tissues except testis.

The catalysed reaction is ATP + H2O = ADP + phosphate + H(+). The sequence is that of Probable ATP-dependent RNA helicase DDX43 (DDX43) from Homo sapiens (Human).